Consider the following 1075-residue polypeptide: Carbamoyl phosphate synthase large chain (1075 aa).

The interval 2–403 is carboxyphosphate synthetic domain; that stretch reads PKRTDIKSIL…SLQKALRGLE (402 aa). Positions 129, 169, 175, 176, 208, 210, 215, 241, 242, 243, 285, and 299 each coordinate ATP. The ATP-grasp 1 domain maps to 133–328; the sequence is DIAMKKIGLD…IAKVAAKLAV (196 aa). Residues glutamine 285, glutamate 299, and asparagine 301 each contribute to the Mg(2+) site. Mn(2+) is bound by residues glutamine 285, glutamate 299, and asparagine 301. Residues 404-553 form an oligomerization domain region; sequence VGATGFDPKV…YSTYEDECEA (150 aa). Residues 554–936 form a carbamoyl phosphate synthetic domain region; the sequence is NPSIDRDKIM…AFAKAQLGSN (383 aa). Residues 679 to 870 enclose the ATP-grasp 2 domain; the sequence is QHAVDRLKLK…LAKVAARVMA (192 aa). Residues arginine 715, arginine 754, leucine 756, glutamate 761, glycine 786, valine 787, histidine 788, serine 789, glutamine 829, and glutamate 841 each contribute to the ATP site. Mg(2+)-binding residues include glutamine 829, glutamate 841, and asparagine 843. The Mn(2+) site is built by glutamine 829, glutamate 841, and asparagine 843. Residues 937-1075 enclose the MGS-like domain; sequence STMKKQGRAL…QEMHAQIKKS (139 aa). Positions 937 to 1075 are allosteric domain; sequence STMKKQGRAL…QEMHAQIKKS (139 aa).

It belongs to the CarB family. Composed of two chains; the small (or glutamine) chain promotes the hydrolysis of glutamine to ammonia, which is used by the large (or ammonia) chain to synthesize carbamoyl phosphate. Tetramer of heterodimers (alpha,beta)4. It depends on Mg(2+) as a cofactor. Mn(2+) is required as a cofactor.

The enzyme catalyses hydrogencarbonate + L-glutamine + 2 ATP + H2O = carbamoyl phosphate + L-glutamate + 2 ADP + phosphate + 2 H(+). The catalysed reaction is hydrogencarbonate + NH4(+) + 2 ATP = carbamoyl phosphate + 2 ADP + phosphate + 2 H(+). It participates in amino-acid biosynthesis; L-arginine biosynthesis; carbamoyl phosphate from bicarbonate: step 1/1. Its pathway is pyrimidine metabolism; UMP biosynthesis via de novo pathway; (S)-dihydroorotate from bicarbonate: step 1/3. In terms of biological role, large subunit of the glutamine-dependent carbamoyl phosphate synthetase (CPSase). CPSase catalyzes the formation of carbamoyl phosphate from the ammonia moiety of glutamine, carbonate, and phosphate donated by ATP, constituting the first step of 2 biosynthetic pathways, one leading to arginine and/or urea and the other to pyrimidine nucleotides. The large subunit (synthetase) binds the substrates ammonia (free or transferred from glutamine from the small subunit), hydrogencarbonate and ATP and carries out an ATP-coupled ligase reaction, activating hydrogencarbonate by forming carboxy phosphate which reacts with ammonia to form carbamoyl phosphate. The sequence is that of Carbamoyl phosphate synthase large chain from Salmonella typhimurium (strain LT2 / SGSC1412 / ATCC 700720).